Here is a 724-residue protein sequence, read N- to C-terminus: Propionyl-CoA carboxylase alpha chain, mitochondrial (724 aa).

The N-terminal 48 residues, 1-48 (MAGQWVRTVALLAARRHWRRSSQQQLLGTLKHAPVYSYQCLVVSRSLS), are a transit peptide targeting the mitochondrion. A Biotin carboxylation domain is found at 58 to 505 (TFDKILIANR…STKFLSDVYP (448 aa)). The residue at position 61 (Lys-61) is an N6-acetyllysine; alternate. An N6-succinyllysine; alternate modification is found at Lys-61. Lys-115 is subject to N6-succinyllysine. Position 146 is an N6-acetyllysine; alternate (Lys-146). Residue Lys-146 is modified to N6-succinyllysine; alternate. Lys-150 carries the post-translational modification N6-acetyllysine. Lys-173 contributes to the ATP binding site. One can recognise an ATP-grasp domain in the interval 177-374 (KLLAKRAKVN…LVQEMILVAK (198 aa)). Lys-184 carries the post-translational modification N6-succinyllysine. An N6-acetyllysine; alternate modification is found at Lys-196. Lys-196 bears the N6-succinyllysine; alternate mark. ATP-binding positions include 205-266 (AREI…PRHI), Glu-257, and Asn-292. Ser-248 is modified (phosphoserine). The residue at position 258 (Lys-258) is an N6-succinyllysine. Position 324 is an N6-acetyllysine; alternate (Lys-324). Lys-324 is modified (N6-succinyllysine; alternate). Mg(2+) contacts are provided by Glu-332, Glu-345, and Asn-347. 3 residues coordinate Mn(2+): Glu-332, Glu-345, and Asn-347. Arg-349 is an active-site residue. Lys-381 and Lys-403 each carry N6-succinyllysine. Phe-405 serves as a coordination point for biotin. Residue Lys-492 is modified to N6-acetyllysine. Residues Lys-498, Lys-509, Lys-554, and Lys-644 each carry the N6-succinyllysine modification. In terms of domain architecture, Biotinyl-binding spans 645-724 (FMLEKVPKDT…GEGDLLVELE (80 aa)). An N6-biotinyllysine; by HLCS modification is found at Lys-690.

In terms of assembly, the holoenzyme is a dodecamer composed of 6 PCCA/alpha subunits and 6 PCCB/beta subunits. Interacts (via the biotin carboxylation domain) with SIRT4. Interacts with SIRT3 and SIRT5. Mg(2+) is required as a cofactor. The cofactor is Mn(2+). It depends on biotin as a cofactor. In terms of processing, acetylated. The biotin cofactor is covalently attached to the C-terminal biotinyl-binding domain and is required for the catalytic activity. Biotinylation is catalyzed by HLCS.

The protein resides in the mitochondrion matrix. The enzyme catalyses propanoyl-CoA + hydrogencarbonate + ATP = (S)-methylmalonyl-CoA + ADP + phosphate + H(+). It catalyses the reaction butanoyl-CoA + hydrogencarbonate + ATP = (2S)-ethylmalonyl-CoA + ADP + phosphate + H(+). The protein operates within metabolic intermediate metabolism; propanoyl-CoA degradation; succinyl-CoA from propanoyl-CoA: step 1/3. Functionally, this is one of the 2 subunits of the biotin-dependent propionyl-CoA carboxylase (PCC), a mitochondrial enzyme involved in the catabolism of odd chain fatty acids, branched-chain amino acids isoleucine, threonine, methionine, and valine and other metabolites. Propionyl-CoA carboxylase catalyzes the carboxylation of propionyl-CoA/propanoyl-CoA to D-methylmalonyl-CoA/(S)-methylmalonyl-CoA. Within the holoenzyme, the alpha subunit catalyzes the ATP-dependent carboxylation of the biotin carried by the biotin carboxyl carrier (BCC) domain, while the beta subunit then transfers the carboxyl group from carboxylated biotin to propionyl-CoA. Propionyl-CoA carboxylase also significantly acts on butyryl-CoA/butanoyl-CoA, which is converted to ethylmalonyl-CoA/(2S)-ethylmalonyl-CoA. Other alternative minor substrates include (2E)-butenoyl-CoA/crotonoyl-CoA. This chain is Propionyl-CoA carboxylase alpha chain, mitochondrial, found in Mus musculus (Mouse).